The sequence spans 478 residues: Adenosylhomocysteinase (478 aa).

T56, D139, and E201 together coordinate substrate. 202-204 is an NAD(+) binding site; the sequence is TTT. Positions 231 and 235 each coordinate substrate. Residues N236, 265-270, E288, N323, 344-346, and N392 each bind NAD(+); these read GYGDVG and IGH.

The protein belongs to the adenosylhomocysteinase family. NAD(+) serves as cofactor.

It is found in the cytoplasm. The enzyme catalyses S-adenosyl-L-homocysteine + H2O = L-homocysteine + adenosine. It participates in amino-acid biosynthesis; L-homocysteine biosynthesis; L-homocysteine from S-adenosyl-L-homocysteine: step 1/1. Functionally, may play a key role in the regulation of the intracellular concentration of adenosylhomocysteine. In Corynebacterium diphtheriae (strain ATCC 700971 / NCTC 13129 / Biotype gravis), this protein is Adenosylhomocysteinase.